The following is a 109-amino-acid chain: Oncomodulin (109 aa).

The residue at position 2 (S2) is an N-acetylserine. EF-hand domains are found at residues 39-74 (MSAS…FQSD) and 78-109 (LTES…MVHS). Residues D52, D54, S56, Y58, E63, D91, D93, D95, K97, and E102 each contribute to the Ca(2+) site.

The protein belongs to the parvalbumin family. In terms of tissue distribution, found in tumor tissues and not detected in normal tissues.

Its function is as follows. Has some calmodulin-like activity with respect to enzyme activation and growth regulation. Binds two calcium ions. This chain is Oncomodulin (Ocm), found in Rattus norvegicus (Rat).